Reading from the N-terminus, the 285-residue chain is ATP synthase gamma chain (285 aa).

This sequence belongs to the ATPase gamma chain family. As to quaternary structure, F-type ATPases have 2 components, CF(1) - the catalytic core - and CF(0) - the membrane proton channel. CF(1) has five subunits: alpha(3), beta(3), gamma(1), delta(1), epsilon(1). CF(0) has three main subunits: a, b and c.

It localises to the cell membrane. Its function is as follows. Produces ATP from ADP in the presence of a proton gradient across the membrane. The gamma chain is believed to be important in regulating ATPase activity and the flow of protons through the CF(0) complex. This chain is ATP synthase gamma chain, found in Geobacillus kaustophilus (strain HTA426).